The following is a 544-amino-acid chain: Probable acyl-activating enzyme 8 (544 aa).

Belongs to the ATP-dependent AMP-binding enzyme family. Expressed at low levels in roots, leaves, stems, flowers and developing seeds.

May act as an acid--thiol ligase that activates carboxylic acids by forming acyl-CoAs. The protein is Probable acyl-activating enzyme 8 (AAE8) of Arabidopsis thaliana (Mouse-ear cress).